The primary structure comprises 462 residues: HEPACAM family member 2 (462 aa).

Residues 1 to 31 (MGQDAFMEPFGDTLGVFQCKIYLLLFGACSG) form the signal peptide. N-linked (GlcNAc...) asparagine glycosylation is found at Asn-85, Asn-129, and Asn-165. Ig-like C2-type domains follow at residues 149-233 (PVVQ…SDII) and 235-331 (PIIY…THFT). 2 disulfides stabilise this stretch: Cys-170–Cys-219 and Cys-270–Cys-315. N-linked (GlcNAc...) asparagine glycosylation occurs at Asn-320. A helical transmembrane segment spans residues 352–372 (LASITGISLFLIISMCLLFLW). Residues 373-462 (KKYQPYKVIK…IPAQQQDHPE (90 aa)) are Cytoplasmic-facing.

In terms of processing, poly-ADP-ribosylated (PARsylated) by tankyrase TNKS during late G2 and prophase, leading to translocation to mitotic centrosomes. Post-translationally, N-glycosylated. Widely expressed.

The protein resides in the golgi apparatus membrane. The protein localises to the cytoplasm. Its subcellular location is the cytoskeleton. It localises to the spindle. It is found in the microtubule organizing center. The protein resides in the centrosome. The protein localises to the midbody. In terms of biological role, required during prometaphase for centrosome maturation. Following poly-ADP-ribosylation (PARsylation) by TNKS, translocates from the Golgi apparatus to mitotic centrosomes and plays a key role in the formation of robust microtubules for prompt movement of chromosomes: anchors AKAP9/CG-NAP, a scaffold protein of the gamma-tubulin ring complex and promotes centrosome maturation. This chain is HEPACAM family member 2 (HEPACAM2), found in Homo sapiens (Human).